Here is a 1126-residue protein sequence, read N- to C-terminus: [F-actin]-monooxygenase mical2 (1126 aa).

The tract at residues 2–494 (GENGDDKHGR…KHLFITNELQ (493 aa)) is monooxygenase domain. Residues C97, 116–118 (EKR), 123–125 (RNN), F183, Y299, and D399 each bind FAD. A Calponin-homology (CH) domain is found at 516–619 (DVRPNKLLIW…MVLYLSKFYE (104 aa)). Residues 659–680 (RKRVPKDEKTSDDSDLNKRRKT) carry the Nuclear localization signal motif. Disordered stretches follow at residues 748-830 (AVTA…SLSS) and 892-935 (PSLG…SGMS). Over residues 792-803 (VRPPVQPRPGPA) the composition is skewed to pro residues. Positions 805 to 824 (PTRELRVVERAQSHPDDLGR) are enriched in basic and acidic residues. Low complexity predominate over residues 918–932 (SSSDSSPSSAPSRKS). Positions 1001–1063 (DTCYFCKRRV…QPHFMHSVTK (63 aa)) constitute an LIM zinc-binding domain. Zn(2+) contacts are provided by C1003, C1006, H1024, C1027, C1030, C1033, C1053, and H1056.

This sequence belongs to the Mical family. It depends on FAD as a cofactor.

The protein resides in the nucleus. Its subcellular location is the cytoplasm. It carries out the reaction L-methionyl-[F-actin] + NADPH + O2 + H(+) = L-methionyl-(R)-S-oxide-[F-actin] + NADP(+) + H2O. Functionally, nuclear monooxygenase that promotes depolymerization of F-actin by mediating oxidation of specific methionine residues on actin and regulates the srf signaling. Acts by modifying nuclear actin subunits through the addition of oxygen to form methionine-sulfoxide, leading to promote actin filament severing and prevent repolymerization. Acts as a key regulator of the srf signaling pathway elicited by nerve growth factor and serum: mediates oxidation and subsequent depolymerization of nuclear actin, leading to increase mkl1/mrtf-a presence in the nucleus and promote srf:mkl1/mrtf-a-dependent gene transcription. The polypeptide is [F-actin]-monooxygenase mical2 (Xenopus tropicalis (Western clawed frog)).